The following is a 380-amino-acid chain: Cystathionine gamma-synthase (380 aa).

N6-(pyridoxal phosphate)lysine is present on K195.

Belongs to the trans-sulfuration enzymes family. As to quaternary structure, homotetramer. Pyridoxal 5'-phosphate serves as cofactor.

It localises to the cytoplasm. It carries out the reaction O-succinyl-L-homoserine + L-cysteine = L,L-cystathionine + succinate + H(+). Its function is as follows. Catalyzes the formation of L-cystathionine from O-succinyl-L-homoserine (OSHS) and L-cysteine, via a gamma-replacement reaction. In the absence of thiol, catalyzes gamma-elimination to form 2-oxobutanoate, succinate and ammonia. This Helicobacter pylori (strain J99 / ATCC 700824) (Campylobacter pylori J99) protein is Cystathionine gamma-synthase (metB).